Consider the following 988-residue polypeptide: Ephrin type-B receptor 3 (988 aa).

The tract at residues 1 to 24 is disordered; the sequence is GVSSRARRPPGSSRSSRRGVTSEL. The Extracellular portion of the chain corresponds to 1–534; it reads GVSSRARRPP…TSKTFQELPL (534 aa). The Eph LBD domain maps to 11–189; the sequence is GSSRSSRRGV…FYKKCSNTIA (179 aa). Residues Cys53 and Cys171 are joined by a disulfide bond. 2 Fibronectin type-III domains span residues 311–424 and 425–522; these read VPSA…TNQA and APSA…TAED. N-linked (GlcNAc...) asparagine glycans are attached at residues Asn323 and Asn418. A helical membrane pass occupies residues 535-555; that stretch reads IVGSATAGLLFVIVVVIIAIV. The Cytoplasmic segment spans residues 556-988; the sequence is CFRKGMVTEQ…QMNQTLPVQV (433 aa). Tyr604 carries the post-translational modification Phosphotyrosine; by autocatalysis. The Protein kinase domain occupies 623-886; that stretch reads VKIEEVIGAG…QIVNTLDKLI (264 aa). Residues 629 to 637 and Lys655 each bind ATP; that span reads IGAGEFGEV. Asp748 functions as the Proton acceptor in the catalytic mechanism. The SAM domain maps to 915–979; sequence TTFTTVGDWL…LSSIQDMRLQ (65 aa). The PDZ-binding motif lies at 986–988; it reads VQV.

It belongs to the protein kinase superfamily. Tyr protein kinase family. Ephrin receptor subfamily. Heterotetramer upon binding of the ligand. The heterotetramer is composed of an ephrin dimer and a receptor dimer. Oligomerization is probably required to induce biological responses. Phosphorylated. Autophosphorylates upon ligand-binding. Autophosphorylation on Tyr-604 is required for interaction with SH2 domain-containing proteins. As to expression, present in 10-day embryonic brain and body tissues. Prominent expression in kidney. Lower expression in lung, and barely detectable in brain, liver, heart, skeletal muscle and thymus.

It localises to the cell membrane. The protein resides in the cell projection. Its subcellular location is the dendrite. The enzyme catalyses L-tyrosyl-[protein] + ATP = O-phospho-L-tyrosyl-[protein] + ADP + H(+). Its function is as follows. Receptor tyrosine kinase which binds promiscuously transmembrane ephrin-B family ligands residing on adjacent cells, leading to contact-dependent bidirectional signaling into neighboring cells. The signaling pathway downstream of the receptor is referred to as forward signaling while the signaling pathway downstream of the ephrin ligand is referred to as reverse signaling. Generally has an overlapping and redundant function with EPHB2. Like EPHB2, functions in axon guidance during development. In addition to its role in axon guidance also plays an important redundant role with other ephrin-B receptors in development and maturation of dendritic spines and the formation of excitatory synapses. May control other aspects of development through regulation of cell migration and positioning. The protein is Ephrin type-B receptor 3 (EPHB3) of Gallus gallus (Chicken).